The following is a 464-amino-acid chain: MNAATKLPTQLGPIHFTGIGGIGMSGIAEVLLTHGYTVQGSDLKPSKITERLERLGAKIFIGQVGENLADAEVVVISSAIKPGNPELETARARGLPVVRRAEMLAELMRLKSNIAIAGTHGKTTTTTMVATLLDRGGIDPTVINGGIIHAYDSNARAGAGEWMVVEADESDGTFNRLPATIAVVTNIDPEHMEHWGSFERLKDGFHEFVSNIPFYGLAVCCTDHPEVQALVGRITDRRVVTFGFNTQADVRAVNLTYKSGVAHFDILLRNEGQVISGCTLPMPGDHNVSNALAAVAVARHLGMKRDEIRAALAGFAGVNRRFTKVAELGGVTIIDDYGHHPVEIAAVLKAARQASEGRVIAVHQPHRFSRLASLFEDFCTCFNEADVVGISDIFAAGEDPIPGASRDDLVKGLIAHGHRHAVAVPDEDALEALIRAEAKPGDIVVCLGAGTISTWAHNLPARMG.

118 to 124 provides a ligand contact to ATP; sequence GTHGKTT.

The protein belongs to the MurCDEF family.

The protein resides in the cytoplasm. It catalyses the reaction UDP-N-acetyl-alpha-D-muramate + L-alanine + ATP = UDP-N-acetyl-alpha-D-muramoyl-L-alanine + ADP + phosphate + H(+). It participates in cell wall biogenesis; peptidoglycan biosynthesis. Functionally, cell wall formation. This is UDP-N-acetylmuramate--L-alanine ligase from Dinoroseobacter shibae (strain DSM 16493 / NCIMB 14021 / DFL 12).